The primary structure comprises 489 residues: Cysteine--tRNA ligase (489 aa).

A Zn(2+)-binding site is contributed by C29. A 'HIGH' region motif is present at residues 31–41 (VTVYDYCHLGH). C215, H240, and E244 together coordinate Zn(2+). A 'KMSKS' region motif is present at residues 272 to 276 (KMSKS). K275 serves as a coordination point for ATP.

It belongs to the class-I aminoacyl-tRNA synthetase family. Monomer. Requires Zn(2+) as cofactor.

It is found in the cytoplasm. It catalyses the reaction tRNA(Cys) + L-cysteine + ATP = L-cysteinyl-tRNA(Cys) + AMP + diphosphate. The sequence is that of Cysteine--tRNA ligase from Trichodesmium erythraeum (strain IMS101).